Reading from the N-terminus, the 127-residue chain is Fluoride-specific ion channel FluC 1 (127 aa).

The next 4 helical transmembrane spans lie at 4 to 24 (TLLAVFIGGGVGSMARWLVSL), 35 to 55 (VGTLIVNLVGAFIIGLTLALF), 71 to 91 (TGFCGGLTTFSTFSVEVVYLI), and 101 to 121 (GTILLNVAGSLAMTMLAFILV). Residues Gly75 and Thr78 each contribute to the Na(+) site.

Belongs to the fluoride channel Fluc/FEX (TC 1.A.43) family.

It is found in the cell inner membrane. It carries out the reaction fluoride(in) = fluoride(out). Na(+) is not transported, but it plays an essential structural role and its presence is essential for fluoride channel function. Fluoride-specific ion channel. Important for reducing fluoride concentration in the cell, thus reducing its toxicity. The protein is Fluoride-specific ion channel FluC 1 of Yersinia pseudotuberculosis serotype I (strain IP32953).